A 105-amino-acid chain; its full sequence is Class I hydrophobin 1 (105 aa).

The signal sequence occupies residues 1–17 (MQFTSFAILAISAVASA). 4 disulfide bridges follow: C36–C85, C44–C78, C45–C63, and C86–C100. 3 N-linked (GlcNAc...) asparagine glycosylation sites follow: N48, N67, and N97.

Belongs to the fungal hydrophobin family. Self-assembles to form functional amyloid fibrils called rodlets. Self-assembly into fibrillar rodlets occurs spontaneously at hydrophobic:hydrophilic interfaces and the rodlets further associate laterally to form amphipathic monolayers. Abundant on conidia and aerial structures formed in vitro and emerging from disease lesions on infected tomato plants.

Its subcellular location is the secreted. The protein resides in the cell wall. Aerial growth, conidiation, and dispersal of filamentous fungi in the environment rely upon a capability of their secreting small amphipathic proteins called hydrophobins (HPBs) with low sequence identity. Class I can self-assemble into an outermost layer of rodlet bundles on aerial cell surfaces, conferring cellular hydrophobicity that supports fungal growth, development and dispersal; whereas Class II form highly ordered films at water-air interfaces through intermolecular interactions but contribute nothing to the rodlet structure. Hcf-1 is a class I hydrophobin that is not necessary for the development of hyphae or conidia but acts as the main determinant of conidium hydrophobicity and, thus, is required for efficient water-mediated dispersal of conidia. Forms a component of the rodlet layer, but other hydrophobins must also participate in this proces. The sequence is that of Class I hydrophobin 1 from Passalora fulva (Tomato leaf mold).